A 376-amino-acid polypeptide reads, in one-letter code: Succinate--CoA ligase [ADP-forming] subunit beta (376 aa).

One can recognise an ATP-grasp domain in the interval 9–234 (KAIAKKYGIP…ERELSELEKE (226 aa)). ATP contacts are provided by residues Lys45, 52 to 54 (GRG), Glu91, Glu94, and Glu99. Mg(2+) is bound by residues Asn191 and Asp204. Substrate-binding positions include Asn254 and 311-313 (GIT).

It belongs to the succinate/malate CoA ligase beta subunit family. As to quaternary structure, heterotetramer of two alpha and two beta subunits. It depends on Mg(2+) as a cofactor.

The enzyme catalyses succinate + ATP + CoA = succinyl-CoA + ADP + phosphate. The catalysed reaction is GTP + succinate + CoA = succinyl-CoA + GDP + phosphate. Its pathway is carbohydrate metabolism; tricarboxylic acid cycle; succinate from succinyl-CoA (ligase route): step 1/1. Succinyl-CoA synthetase functions in the citric acid cycle (TCA), coupling the hydrolysis of succinyl-CoA to the synthesis of either ATP or GTP and thus represents the only step of substrate-level phosphorylation in the TCA. The beta subunit provides nucleotide specificity of the enzyme and binds the substrate succinate, while the binding sites for coenzyme A and phosphate are found in the alpha subunit. The protein is Succinate--CoA ligase [ADP-forming] subunit beta of Ignicoccus hospitalis (strain KIN4/I / DSM 18386 / JCM 14125).